A 504-amino-acid chain; its full sequence is Glucose-6-phosphate isomerase (504 aa).

Catalysis depends on E333, which acts as the Proton donor. Residues H364 and K473 contribute to the active site.

Belongs to the GPI family.

It localises to the cytoplasm. The enzyme catalyses alpha-D-glucose 6-phosphate = beta-D-fructose 6-phosphate. It functions in the pathway carbohydrate biosynthesis; gluconeogenesis. Its pathway is carbohydrate degradation; glycolysis; D-glyceraldehyde 3-phosphate and glycerone phosphate from D-glucose: step 2/4. Its function is as follows. Catalyzes the reversible isomerization of glucose-6-phosphate to fructose-6-phosphate. In Xanthomonas axonopodis pv. citri (strain 306), this protein is Glucose-6-phosphate isomerase.